The sequence spans 195 residues: Imidazole glycerol phosphate synthase subunit HisH 2 (195 aa).

The 194-residue stretch at 2 to 195 (KIIIIDTACA…LISNFIKDIG (194 aa)) folds into the Glutamine amidotransferase type-1 domain. Cys77 acts as the Nucleophile in catalysis. Catalysis depends on residues His175 and Glu177.

As to quaternary structure, heterodimer of HisH and HisF.

It is found in the cytoplasm. It catalyses the reaction 5-[(5-phospho-1-deoxy-D-ribulos-1-ylimino)methylamino]-1-(5-phospho-beta-D-ribosyl)imidazole-4-carboxamide + L-glutamine = D-erythro-1-(imidazol-4-yl)glycerol 3-phosphate + 5-amino-1-(5-phospho-beta-D-ribosyl)imidazole-4-carboxamide + L-glutamate + H(+). The enzyme catalyses L-glutamine + H2O = L-glutamate + NH4(+). The protein operates within amino-acid biosynthesis; L-histidine biosynthesis; L-histidine from 5-phospho-alpha-D-ribose 1-diphosphate: step 5/9. Functionally, IGPS catalyzes the conversion of PRFAR and glutamine to IGP, AICAR and glutamate. The HisH subunit provides the glutamine amidotransferase activity that produces the ammonia necessary to HisF for the synthesis of IGP and AICAR. In Campylobacter jejuni subsp. jejuni serotype O:2 (strain ATCC 700819 / NCTC 11168), this protein is Imidazole glycerol phosphate synthase subunit HisH 2 (hisH2).